A 313-amino-acid chain; its full sequence is Foldase protein PrsA (313 aa).

A signal peptide spans 1–20 (MKKKLLAGAITLLSVATLAA). Cys-21 carries N-palmitoyl cysteine lipidation. A lipid anchor (S-diacylglycerol cysteine) is attached at Cys-21. The PpiC domain maps to 143–241 (TPDVTAQIIR…SQYYIVKLTK (99 aa)).

Belongs to the PrsA family.

It is found in the cell membrane. The enzyme catalyses [protein]-peptidylproline (omega=180) = [protein]-peptidylproline (omega=0). Functionally, plays a major role in protein secretion by helping the post-translocational extracellular folding of several secreted proteins. The protein is Foldase protein PrsA of Streptococcus pneumoniae (strain ATCC BAA-255 / R6).